The sequence spans 390 residues: Neuromedin-B receptor (390 aa).

Over 1-41 (MPPRSLSNLSFPTEANESELVPEVWEKDFLPDSDGTTAELV) the chain is Extracellular. Residues Asn8 and Asn16 are each glycosylated (N-linked (GlcNAc...) asparagine). Residues 42 to 65 (IRCVIPSLYLIIISVGLLGNIMLV) traverse the membrane as a helical segment. Residues 66 to 79 (KIFLTNSAMRNVPN) lie on the Cytoplasmic side of the membrane. A helical transmembrane segment spans residues 80–99 (IFISNLAAGDLLLLLTCVPV). Residues 100-117 (DASRYFFDEWVFGKLGCK) lie on the Extracellular side of the membrane. The cysteines at positions 116 and 198 are disulfide-linked. The chain crosses the membrane as a helical span at residues 118–139 (LIPAIQLTSVGVSVFTLTALSA). Residues 140 to 156 (DRYRAIVNPMDMQTSGV) are Cytoplasmic-facing. A helical transmembrane segment spans residues 157-177 (LLWTSLKAVGIWVVSVLLAVP). The Extracellular segment spans residues 178–211 (EAVFSEVARIGSLDNSSFTACIPYPQTDELHPKI). Asn192 carries an N-linked (GlcNAc...) asparagine glycan. Residues 212–235 (HSVLIFLVYFLIPLVIISIYYYHI) traverse the membrane as a helical segment. Over 236–266 (AKTLIKSAHNLPGEYNEHTKKQMETRKRLAK) the chain is Cytoplasmic. Residues 267 to 287 (IVLVFVGCFVFCWFPNHVLYL) traverse the membrane as a helical segment. Residues 288-299 (YRSFNYKEIDPS) are Extracellular-facing. A helical transmembrane segment spans residues 300–327 (LGHMIVTLVARVLSFSNSCVNPFALYLL). The Cytoplasmic segment spans residues 328–390 (SESFRKHFNS…GHSTKQEIAL (63 aa)). A lipid anchor (S-palmitoyl cysteine) is attached at Cys341. Phosphoserine is present on Ser352.

It belongs to the G-protein coupled receptor 1 family. Expressed in a subset of neurons of the pre-Botzinger complex. Within the pre-Botzinger complex, there is some overlap with neurons expressing Grpr with some cells expressing only Grpr or Nmbr while some cells express both. Expressed in dorsal root ganglion neurons and mast cells. Expressed in lung.

It is found in the cell membrane. Functionally, receptor for neuromedin-B. Contributes to the maintenance of basal sigh rate through signaling in the pre-Botzinger complex, a cluster of several thousand neurons in the ventrolateral medulla responsible for inspiration during respiratory activity. Contributes to the induction of sneezing following exposure to chemical irritants or allergens which causes release of NMB by nasal sensory neurons and activation of NMBR-expressing neurons in the sneeze-evoking region of the brainstem. These in turn activate neurons of the caudal ventral respiratory group, giving rise to the sneezing response. Contributes to induction of acute itch, possibly through its activation on dorsal root ganglion neurons by the NMB peptide. Plays a role in the innate immune response to influenza A virus infection by enhancing interferon alpha expression and reducing expression of IL6. Plays a role in CSF1-induced proliferation of osteoclast precursors by contributing to the positive regulation of the expression of the CSF1 receptor CSF1R. The chain is Neuromedin-B receptor (Nmbr) from Mus musculus (Mouse).